The following is a 330-amino-acid chain: DNA primase small subunit PriS (330 aa).

Catalysis depends on residues D101 and D103. Residues C116, C119, C128, and D131 each coordinate Zn(2+). The active site involves D235.

The protein belongs to the eukaryotic-type primase small subunit family. As to quaternary structure, heterodimer of a small subunit (PriS) and a large subunit (PriL). Mg(2+) serves as cofactor. Requires Mn(2+) as cofactor.

Catalytic subunit of DNA primase, an RNA polymerase that catalyzes the synthesis of short RNA molecules used as primers for DNA polymerase during DNA replication. The small subunit contains the primase catalytic core and has DNA synthesis activity on its own. Binding to the large subunit stabilizes and modulates the activity, increasing the rate of DNA synthesis while decreasing the length of the DNA fragments, and conferring RNA synthesis capability. The DNA polymerase activity may enable DNA primase to also catalyze primer extension after primer synthesis. May also play a role in DNA repair. The polypeptide is DNA primase small subunit PriS (Saccharolobus islandicus (strain M.16.27) (Sulfolobus islandicus)).